We begin with the raw amino-acid sequence, 329 residues long: Putative dehydrogenase RB0419 (329 aa).

It belongs to the ornithine cyclodeaminase/mu-crystallin family.

This Rhizobium meliloti (strain 1021) (Ensifer meliloti) protein is Putative dehydrogenase RB0419.